Reading from the N-terminus, the 965-residue chain is PWWP domain-containing protein 4 (965 aa).

One can recognise a PWWP domain in the interval 135 to 196; the sequence is VGDMVWGKVK…PAELIPFEPH (62 aa). The span at 437–455 shows a compositional bias: polar residues; it reads MNFTSSSGNIPGKKSSVSK. Disordered regions lie at residues 437 to 507, 526 to 577, 649 to 708, and 905 to 927; these read MNFT…KSSL, VVKR…KSSQ, SAKT…SLAP, and LSSQ…PPLD. Basic and acidic residues-rich tracts occupy residues 456–474 and 481–495; these read LSRD…RMGE and DQEK…KQDE. Residues 496–507 are compositionally biased toward polar residues; it reads TGTNSRSNKSSL. Positions 546–553 match the Nuclear localization signal motif; it reads KKKEYVSE. Residues 549 to 563 show a composition bias toward basic and acidic residues; sequence EYVSELNRDTPDKRK. Over residues 657 to 676 the composition is skewed to polar residues; that stretch reads NEQSKAGRNRISSDSQQDVP. Basic and acidic residues predominate over residues 691–702; sequence ASDKKTNQDATK. Residues 905-919 show a composition bias toward polar residues; it reads LSSQDSEPKPVNNQV.

The protein belongs to the PDP family. In terms of assembly, component of the PRC2 (polycomb repressive complex 2) complex which regulates histone methylation on histone H3K27.

The protein resides in the nucleus. Functionally, may influence gene expression by regulating the function of the PRC2 complex and modulating H3K27me3 level. The protein is PWWP domain-containing protein 4 of Arabidopsis thaliana (Mouse-ear cress).